The sequence spans 601 residues: Glutathione-regulated potassium-efflux system protein KefB (601 aa).

Transmembrane regions (helical) follow at residues 4–24 (SDFLLAGVLFLFAAVAAVPLA), 29–49 (IGAVLGYLLAGIAIGPWGLGF), 55–75 (EILHFSELGVVFLMFIIGLEL), 87–107 (IFGVGAAQVLLSAALLAGLLM), 115–135 (AAVVGGIGLAMSSTAMALQLM), 152–172 (VLLFQDLAVIPALALVPLLAG), 177–197 (HFDWMKIGMKVLAFVGMLIGG), 207–227 (FIAASGVREVFTAATLLLVLG), 230–250 (LFMDALGLSMALGTFIAGVLL), 268–288 (GLLLGLFFISVGMSLNLGVLY), 291–311 (LLWVVISVVVLVAVKILVLYL), 324–344 (MQFAGVLSQGGEFAFVLFSTA), and 356–376 (ALLLVTVTLSMMTTPLLMKLV). The RCK N-terminal domain maps to 400 to 519 (KPQVIVVGFG…AGVTQFSRET (120 aa)).

Belongs to the monovalent cation:proton antiporter 2 (CPA2) transporter (TC 2.A.37) family. KefB subfamily. In terms of assembly, interacts with the regulatory subunit KefG.

The protein localises to the cell inner membrane. In terms of biological role, pore-forming subunit of a potassium efflux system that confers protection against electrophiles. Catalyzes K(+)/H(+) antiport. The polypeptide is Glutathione-regulated potassium-efflux system protein KefB (Escherichia coli O1:K1 / APEC).